Reading from the N-terminus, the 610-residue chain is T-cell immunomodulatory protein (610 aa).

A signal peptide spans 1–32 (MAAGRLPSARAVLAPLFLGLALLSVGPAPARA). N35, N123, N138, N145, N150, N175, and N241 each carry an N-linked (GlcNAc...) asparagine glycan. Residues 98-135 (LVTSVVPGDYDGDSQMDVLLTYFPQNHTNSELGAVIFW) form an FG-GAP 1; atypical repeat. The FG-GAP 2; atypical repeat unit spans residues 153–183 (FHDQPLIMDFNGDLIPDVFGITNESSQPQIL). Residues 256–291 (VVGQSAFADFDGDGHMDHLLPGCEDKDCQKSAIYLM) form an FG-GAP 3; atypical repeat. N-linked (GlcNAc...) asparagine glycosylation is found at N351, N369, and N480. Residues 565-585 (VLLTAVALIGVCIFILAIIAI) form a helical membrane-spanning segment.

The protein belongs to the TIP family. In terms of assembly, interacts with RUVBL1, RUVBL2 and alpha-tubulin.

The protein localises to the secreted. It is found in the membrane. In terms of biological role, modulator of T-cell function. Has a protective effect in graft versus host disease model. This Mus musculus (Mouse) protein is T-cell immunomodulatory protein.